Consider the following 62-residue polypeptide: MEQRKCSFCGELLEPGTGLLFAKRDGSTYYFCSSKCKGNFDLGRLPRRTVWTEQGRIYLKKA.

Zn(2+)-binding residues include cysteine 6, cysteine 9, cysteine 32, and cysteine 36. The C4-type zinc finger occupies 6–36 (CSFCGELLEPGTGLLFAKRDGSTYYFCSSKC).

It belongs to the eukaryotic ribosomal protein eL24 family. In terms of assembly, part of the 50S ribosomal subunit. Forms a cluster with proteins L3 and L14. Requires Zn(2+) as cofactor.

Its function is as follows. Binds to the 23S rRNA. The chain is Large ribosomal subunit protein eL24 from Methanococcoides burtonii (strain DSM 6242 / NBRC 107633 / OCM 468 / ACE-M).